Reading from the N-terminus, the 448-residue chain is Probable ribonuclease FAU-1 (448 aa).

It belongs to the FAU-1 family.

Its function is as follows. Probable RNase involved in rRNA stability through maturation and/or degradation of precursor rRNAs. Binds to RNA in loop regions with AU-rich sequences. This is Probable ribonuclease FAU-1 from Pyrobaculum calidifontis (strain DSM 21063 / JCM 11548 / VA1).